The following is a 470-amino-acid chain: Cysteine--tRNA ligase (470 aa).

Cys27 serves as a coordination point for Zn(2+). Residues Pro29 to Asn39 carry the 'HIGH' region motif. Residues Cys207, His232, and Glu236 each contribute to the Zn(2+) site. Positions Lys264–Ser268 match the 'KMSKS' region motif. Lys267 is an ATP binding site.

It belongs to the class-I aminoacyl-tRNA synthetase family. In terms of assembly, monomer. It depends on Zn(2+) as a cofactor.

It localises to the cytoplasm. The catalysed reaction is tRNA(Cys) + L-cysteine + ATP = L-cysteinyl-tRNA(Cys) + AMP + diphosphate. This is Cysteine--tRNA ligase from Lachnoclostridium phytofermentans (strain ATCC 700394 / DSM 18823 / ISDg) (Clostridium phytofermentans).